Reading from the N-terminus, the 286-residue chain is 2-dehydro-3-deoxyphosphooctonate aldolase (286 aa).

Belongs to the KdsA family.

The protein localises to the cytoplasm. It carries out the reaction D-arabinose 5-phosphate + phosphoenolpyruvate + H2O = 3-deoxy-alpha-D-manno-2-octulosonate-8-phosphate + phosphate. It participates in carbohydrate biosynthesis; 3-deoxy-D-manno-octulosonate biosynthesis; 3-deoxy-D-manno-octulosonate from D-ribulose 5-phosphate: step 2/3. It functions in the pathway bacterial outer membrane biogenesis; lipopolysaccharide biosynthesis. The protein is 2-dehydro-3-deoxyphosphooctonate aldolase of Shewanella denitrificans (strain OS217 / ATCC BAA-1090 / DSM 15013).